The primary structure comprises 307 residues: RHOMBOID-like protein 6, mitochondrial (307 aa).

A mitochondrion-targeting transit peptide spans 1–62; sequence MRSRDMERGR…DCVAKLLRRF (62 aa). A run of 6 helical transmembrane segments spans residues 105 to 125, 136 to 156, 159 to 179, 191 to 211, 214 to 234, and 262 to 282; these read WLHAGIIHLVMNMFDVIIFGI, IGLIYLISGFGGSILSALFLQ, ISVGASGALLGLMGAMLSELL, ALLSFLFIIAINLAIGLLPWV, FAHIGGLLTGFCLGFILLMQP, and LFFVAAVLVVAGLTVGLVMLF. Ser-164 functions as the Nucleophile in the catalytic mechanism. The active-site Charge relay system is the His-216.

The protein belongs to the peptidase S54 family.

It localises to the mitochondrion membrane. The catalysed reaction is Cleaves type-1 transmembrane domains using a catalytic dyad composed of serine and histidine that are contributed by different transmembrane domains.. Its function is as follows. Probable rhomboid-type serine protease that catalyzes intramembrane proteolysis. Might be involved in response to abiotic stimuli. This Arabidopsis thaliana (Mouse-ear cress) protein is RHOMBOID-like protein 6, mitochondrial.